The chain runs to 595 residues: NADPH-dependent diflavin oxidoreductase 1 (595 aa).

In terms of domain architecture, Flavodoxin-like spans 6–150 (VLVLYGSQTG…VIDPWLLSFW (145 aa)). Residues 12 to 17 (SQTGTA), 59 to 62 (ATTG), 97 to 106 (LGDSSYPKFN), and Asp132 contribute to the FMN site. The FAD-binding FR-type domain maps to 204 to 444 (LRPFPAPLVF…WVKKGSLKFP (241 aa)). Residues Arg348, 380–383 (RSFS), and 414–417 (GLCS) contribute to the FAD site. Residues Thr458, 513–514 (SR), and 519–523 (KVYVQ) each bind NADP(+). Trp594 contributes to the FAD binding site.

The protein belongs to the NADPH-dependent diflavin oxidoreductase NDOR1 family. This sequence in the N-terminal section; belongs to the flavodoxin family. It in the C-terminal section; belongs to the flavoprotein pyridine nucleotide cytochrome reductase family. Interacts with ciapin1; as part of the cytosolic iron-sulfur (Fe-S) protein assembly (CIA) machinery. FAD serves as cofactor. It depends on FMN as a cofactor.

The protein localises to the cytoplasm. It is found in the perinuclear region. The catalysed reaction is 2 oxidized [2Fe-2S]-[protein] + NADPH = 2 reduced [2Fe-2S]-[protein] + NADP(+) + H(+). Functionally, NADPH-dependent reductase which is a central component of the cytosolic iron-sulfur (Fe-S) protein assembly (CIA) machinery. Transfers electrons from NADPH via its FAD and FMN prosthetic groups to the [2Fe-2S] cluster of ciapin1, another key component of the CIA machinery. In turn, this reduced cluster provides electrons for assembly of cytosolic iron-sulfur cluster proteins. It can also reduce the [2Fe-2S] cluster of cisd1 and activate this protein implicated in Fe/S cluster repair. This chain is NADPH-dependent diflavin oxidoreductase 1, found in Danio rerio (Zebrafish).